A 220-amino-acid polypeptide reads, in one-letter code: Deoxyribose-phosphate aldolase (220 aa).

Catalysis depends on Asp92, which acts as the Proton donor/acceptor. Lys155 serves as the catalytic Schiff-base intermediate with acetaldehyde. Catalysis depends on Lys184, which acts as the Proton donor/acceptor.

This sequence belongs to the DeoC/FbaB aldolase family. DeoC type 1 subfamily.

Its subcellular location is the cytoplasm. It catalyses the reaction 2-deoxy-D-ribose 5-phosphate = D-glyceraldehyde 3-phosphate + acetaldehyde. It participates in carbohydrate degradation; 2-deoxy-D-ribose 1-phosphate degradation; D-glyceraldehyde 3-phosphate and acetaldehyde from 2-deoxy-alpha-D-ribose 1-phosphate: step 2/2. Catalyzes a reversible aldol reaction between acetaldehyde and D-glyceraldehyde 3-phosphate to generate 2-deoxy-D-ribose 5-phosphate. This chain is Deoxyribose-phosphate aldolase, found in Symbiobacterium thermophilum (strain DSM 24528 / JCM 14929 / IAM 14863 / T).